The following is a 388-amino-acid chain: tRNA (guanine(26)-N(2))-dimethyltransferase (388 aa).

The Trm1 methyltransferase domain occupies 4 to 383 (RTIVEGTTKI…APIAEIKKII (380 aa)). Residues arginine 41, arginine 78, aspartate 94, and alanine 123 each contribute to the S-adenosyl-L-methionine site. Cysteine 251, cysteine 254, cysteine 271, and cysteine 274 together coordinate Zn(2+).

Belongs to the class I-like SAM-binding methyltransferase superfamily. Trm1 family.

It carries out the reaction guanosine(26) in tRNA + 2 S-adenosyl-L-methionine = N(2)-dimethylguanosine(26) in tRNA + 2 S-adenosyl-L-homocysteine + 2 H(+). Its function is as follows. Dimethylates a single guanine residue at position 26 of a number of tRNAs using S-adenosyl-L-methionine as donor of the methyl groups. This chain is tRNA (guanine(26)-N(2))-dimethyltransferase, found in Methanosarcina mazei (strain ATCC BAA-159 / DSM 3647 / Goe1 / Go1 / JCM 11833 / OCM 88) (Methanosarcina frisia).